A 525-amino-acid polypeptide reads, in one-letter code: Bifunctional purine biosynthesis protein PurH (525 aa).

The region spanning 1 to 147 is the MGS-like domain; sequence MTKIERALIS…KNWAHVAIVT (147 aa).

This sequence belongs to the PurH family.

It carries out the reaction (6R)-10-formyltetrahydrofolate + 5-amino-1-(5-phospho-beta-D-ribosyl)imidazole-4-carboxamide = 5-formamido-1-(5-phospho-D-ribosyl)imidazole-4-carboxamide + (6S)-5,6,7,8-tetrahydrofolate. The enzyme catalyses IMP + H2O = 5-formamido-1-(5-phospho-D-ribosyl)imidazole-4-carboxamide. Its pathway is purine metabolism; IMP biosynthesis via de novo pathway; 5-formamido-1-(5-phospho-D-ribosyl)imidazole-4-carboxamide from 5-amino-1-(5-phospho-D-ribosyl)imidazole-4-carboxamide (10-formyl THF route): step 1/1. The protein operates within purine metabolism; IMP biosynthesis via de novo pathway; IMP from 5-formamido-1-(5-phospho-D-ribosyl)imidazole-4-carboxamide: step 1/1. The sequence is that of Bifunctional purine biosynthesis protein PurH from Chromobacterium violaceum (strain ATCC 12472 / DSM 30191 / JCM 1249 / CCUG 213 / NBRC 12614 / NCIMB 9131 / NCTC 9757 / MK).